Reading from the N-terminus, the 230-residue chain is Pyridoxine/pyridoxamine 5'-phosphate oxidase (230 aa).

Residues 21 to 24 (RVEY) and lysine 87 each bind substrate. FMN is bound by residues 82-87 (RSVLCK), 97-98 (YT), lysine 104, and glutamine 126. Substrate contacts are provided by tyrosine 144, arginine 148, and serine 152. FMN-binding positions include 161-162 (QS) and tryptophan 207. A substrate-binding site is contributed by 213 to 215 (RVH). Residue arginine 217 coordinates FMN.

The protein belongs to the pyridoxamine 5'-phosphate oxidase family. Homodimer. It depends on FMN as a cofactor.

The enzyme catalyses pyridoxamine 5'-phosphate + O2 + H2O = pyridoxal 5'-phosphate + H2O2 + NH4(+). It catalyses the reaction pyridoxine 5'-phosphate + O2 = pyridoxal 5'-phosphate + H2O2. Its pathway is cofactor metabolism; pyridoxal 5'-phosphate salvage; pyridoxal 5'-phosphate from pyridoxamine 5'-phosphate: step 1/1. The protein operates within cofactor metabolism; pyridoxal 5'-phosphate salvage; pyridoxal 5'-phosphate from pyridoxine 5'-phosphate: step 1/1. Functionally, catalyzes the oxidation of either pyridoxine 5'-phosphate (PNP) or pyridoxamine 5'-phosphate (PMP) into pyridoxal 5'-phosphate (PLP). The protein is Pyridoxine/pyridoxamine 5'-phosphate oxidase of Mycolicibacterium smegmatis (strain ATCC 700084 / mc(2)155) (Mycobacterium smegmatis).